The following is a 94-amino-acid chain: Adaptation to cold protein J (94 aa).

One can recognise a J domain in the interval Asn3 to Tyr93. Residues Asn74–Pro94 form an essential for interaction with AtcC region.

In terms of assembly, interacts via its C-terminal extension with AtcC. Does not interact with AtcA and AtcB.

Its function is as follows. Involved in cold adaptation. The J-domain is functional and can stimulate the ATPase activity of the DnaK chaperone. May work as a co-chaperone of the DnaK system to support cold resistance. This Shewanella oneidensis (strain ATCC 700550 / JCM 31522 / CIP 106686 / LMG 19005 / NCIMB 14063 / MR-1) protein is Adaptation to cold protein J.